We begin with the raw amino-acid sequence, 260 residues long: 2-oxo-tetronate isomerase (260 aa).

Glu143 acts as the Proton donor/acceptor in catalysis. Mg(2+) contacts are provided by Glu143, Asp178, Gln204, and Glu240. Residue Glu240 is the Proton donor/acceptor of the active site.

It belongs to the hyi family. OtnI subfamily.

It carries out the reaction 2-dehydro-L-erythronate = 3-dehydro-L-erythronate. The enzyme catalyses 2-dehydro-D-erythronate = 3-dehydro-D-erythronate. Functionally, catalyzes the isomerization of 2-oxo-tetronate to 3-oxo-tetronate. The polypeptide is 2-oxo-tetronate isomerase (Cupriavidus necator (strain ATCC 17699 / DSM 428 / KCTC 22496 / NCIMB 10442 / H16 / Stanier 337) (Ralstonia eutropha)).